Here is a 346-residue protein sequence, read N- to C-terminus: Methylthioribose-1-phosphate isomerase (346 aa).

Residues 48-50 (RGA), Arg91, and Gln196 each bind substrate. Asp237 serves as the catalytic Proton donor. 247 to 248 (NK) is a substrate binding site.

This sequence belongs to the eIF-2B alpha/beta/delta subunits family. MtnA subfamily.

The catalysed reaction is 5-(methylsulfanyl)-alpha-D-ribose 1-phosphate = 5-(methylsulfanyl)-D-ribulose 1-phosphate. It participates in amino-acid biosynthesis; L-methionine biosynthesis via salvage pathway; L-methionine from S-methyl-5-thio-alpha-D-ribose 1-phosphate: step 1/6. Catalyzes the interconversion of methylthioribose-1-phosphate (MTR-1-P) into methylthioribulose-1-phosphate (MTRu-1-P). The sequence is that of Methylthioribose-1-phosphate isomerase from Thermosipho africanus (strain TCF52B).